The sequence spans 57 residues: Large ribosomal subunit protein bL32 (57 aa).

Belongs to the bacterial ribosomal protein bL32 family.

The sequence is that of Large ribosomal subunit protein bL32 from Staphylococcus aureus (strain MSSA476).